The sequence spans 2209 residues: MSPSLVVPVFAGHGTTAINSTSLRERAVTDASSSSGALLLDACYYAFNVELSTLSPSEASAVGINPDHFKDPKSLLLLPSHEHYFTNSVVTAATLFLVQTLRYLASVQASSSASFASTLQMNSEHGLGIVGFSSGILPACVVGSSETTLEFISNAVETFRLAFWIGVRLQVHKASVETPELLGESPLPWSLAFLSMSPAAAESAIQSFHKSFEGTPELRVTSVVSETSVTISGRPDILAAFAAQLPPSGPVHKTTVDALYHSSSHHDGVRSQVLADVIRRNIRFPTHADIKIPVRSTYSGELLNKSPEGSASFVEQVIDMILTQPVNWDKVTEALVRAAPEAEVVHLLNFGPGAGLTKGIERYFPSGKVSSIDLSTEAVHTSTLQMPSSVQEPIAICGMSVNMPGAQSVAKLWEVLEKGINTVSEVPEHRFKVSDYNDPKKKSRTMAAHTGNFIDEPDAFDNKFFNISPREARSMDPQQRVLLHTAYEALEDAGYVPNSTPTNNPETFGCYVGVATNDYVQNLRNDIDVYYSTGTLRAFLSGRISYALQFSGPSIVVDTACSSSLIAVYQACRALMNRDCNAAVAGGVNVIGSPDMFLGLDRGHFLSPTGQCKAFDASADGYSRSEGCGIFVLKRLSDAVAENDQILGVIRGVEVNQSGNAYSITRPHAPTQENLFTQTLERSGLDASRISVVEAHGTGTQAGDPIELESIRGIFAKNRKTNNPLHITSVKANIGHLEAASGAAALAKLLLMLRHRTIPRLISLKNLNPRIKPLASDNVIIDTKQVAWAVPDESLPRVALLNNFGAAGSNGALLLEEYIPKSSEKIEVSSTFIVGLSAKNEQALVDLRASYIEYLRSPASAGVSLADIAYTATARRRIFSHRFAVTVKSKEELAHKLELASGKTVSDKAPGKVVFVFSGQGGQYLGMGSALYKTSTLFKSAIDECEYFLKKNNFPGVLPIITSDGESSELTPVEEFEANQAAIFALEYGLAKLWMSWGVTPTAVVGHSLGEYAAHVVAGVLSLESALTLVAHRVRIMMRTCELDTTGMIAINLGSGAVTDILSSSPDFSGISIACYNSATDCVASGAIGQLDALKAHLDKNVHCKSVRLKVPFGYHSSAMQPLLEEFGALAKRVTVHAPKIPVISNPLGRVVREGDKSAFNAEYYLSHCADPVQFESGISALIDDVSFMDIAAWIELGPHPTTLPMLTVHPGVSKEALLVGSLKKRQDDNLTLSSSLSQLYTSNVPVQWRDVFADVSAACVSLPSYPWQKSKFWVAWKEDSPAPASSTEGSPAPTKAFNPVNDFGMLQSWAQFPSAANSQTAIFETPISLLKTSITGHIVGDVPLCPASVYHELALAGIEASKAHLSLPLQGSHSALFNIDYVKPLVYSKDVARVVKTTIAMNTDGSGTFTVESYADSEPESVHCSGQFRPLLVADTTTKFNRMAPVVSRRTAAICSGEDDEAEVITTRTAYEIIFTRVVRYAKEYHTMKNVTISKNGMEGYAIVKLPKDHDRSKFVVHPVFMDTMLHVAGFLANMQGGDNDAYICSKVKSVKAVPSLINNDATYGVFVVNAWVESEGIMLSDAIAVDISEHGQIVAQLKGMCFKKLRLNTLQRSLAMHAGHTSPAPAPKRTVAAAPKPKITEVAPALGPRSSPAKRSVDVQNTVLKIIGDTCGIEVSALDVNADLETYGVDSLMSIEILRKFEESFLQMQFDTTIFSTCNNITELVREISSTIGSQAATAVNTPETASTPEPTLQGDAPQSTDVRSILLELISSFTGFEISSFDLNADADSAYGLDKFLFIPLFSKLQSFFPDVTLDPAKPSVCSTIGELLDEVTAQVQAGPSSSSPGIVDTKPMFVSVLGLDESDIQDDTEFETIGLDSLTAIEALHAIQTKYGLELPSNLFELHNTVKAVNQYISSKQPGKSPKPSEEATMDPDKEEDLSDLTPEQVQSVVRVLRLDEVPMSVQKSSSSGSPLFLFHDGSGAVNYLRRLGSVGREFWGFNNPNYATGKPWGSVEAMASAYADYAVKVAGSRPVIFGGWSFGGVVGFEAARQLMRRGVPVKGVVLIDSPFPVDHVPSSNEFMAVTAGAFTRGGRTPIGRMMWKQLQQNAPLLKTYDPRIAGGPYPPLVLLHNQEGIPPDAFLPYPVPRWMSEKGTDPCLLADDWSGLVGASIKVIHLPGTHFTTFATPHLGAVTQALVDGCAYLDEL.

Positions Leu38–His261 are N-terminal acylcarrier protein transacylase domain (SAT). Residues Gln391–Glu817 enclose the Ketosynthase family 3 (KS3) domain. Residues Cys561, His696, and His736 each act as for beta-ketoacyl synthase activity in the active site. The segment at Val914–Gln1239 is malonyl-CoA:ACP transacylase (MAT) domain. Ser1008 functions as the For acyl/malonyl transferase activity in the catalytic mechanism. The tract at residues Met1306–Asp1436 is N-terminal hotdog fold. The PKS/mFAS DH domain maps to Met1306–Gln1613. The interval Ile1335–Asn1610 is product template (PT) domain. His1338 acts as the Proton acceptor; for dehydratase activity in catalysis. The interval Ala1463–Gln1613 is C-terminal hotdog fold. Catalysis depends on Asp1524, which acts as the Proton donor; for dehydratase activity. 2 Carrier domains span residues Val1659–Ile1734 and Ser1844–Gln1921. 2 positions are modified to O-(pantetheine 4'-phosphoryl)serine: Ser1693 and Ser1881. Residues Ile1917–Leu1945 are disordered. Acidic residues predominate over residues Ala1932–Ser1943. The interval Val1962–Asp2201 is thioesterase (TE) domain.

The enzyme catalyses 3 malonyl-CoA + acetyl-CoA + 2 H(+) = orsellinate + 3 CO2 + 4 CoA. Its pathway is secondary metabolite biosynthesis. Its function is as follows. Non-reducing polyketide synthase, part of the gene cluster that mediates the biosynthesis of melleolides, a range of antifungal and phytotoxic polyketide derivatives composed of an orsellinic acid (OA) moiety esterified to various sesquiterpene alcohols. The first step in melleolides biosynthesis is performed by the delta(6)-protoilludene synthase PRO1 which catalyzes the cyclization of farnesyl diphosphate to protoilludene. The orsellinic acid synthase armB produces OA by condensing acetyl-CoA with 3 malonyl-CoA units in a three-round chain elongation reaction folowed by a C2-C7 ring closure. ArmB further catalyzes the trans-esterification of OA to the various sesquiterpene alcohols resulting from the hydroxylation of protoilludene. The melleolides cluster also includes 5 cytochrome P450 monooxygenases, 4 NAD(+)-dependent oxidoreductases, one flavin-dependent oxidoreductase, and one O-methyltransferase. The cytochrome P450 monooxygenases may be involved in protoilludene hydroxylation to elaborate melleolides with multiple alcohol groups, such as melleolide D, which carries alcohol functionalities at C-4, C-5, C-10, and C-13. The role of the NAD(+)-dependent enzymes remains unknown. Numerous melleolides, including arnamial, show 5'-O-methylation of the aromatic moiety which may be catalyzed by the methyltransferase encoded in the cluster. The flavin-dependent oxidoreductase might represent the dehydrogenase yielding the aldehyde in position 1 of arnamial and other melleolides. Finally, several halogenase localized outside of the cluster (armH1 to armH5), are able to catalyze the transfer of a single chlorine atom to the melleolide backbone, resulting in a 6'-chloromelleolide product. This Armillaria mellea (Honey mushroom) protein is Orsellinic acid synthase armB.